Reading from the N-terminus, the 395-residue chain is MSSPERKRKRVTSTKNPSVKKKKKISPVPTPIPSLPDDLLVSIFARVSRLYYPILSLVSKSFRSLLRSPELYETRSLLGRTESCLYLCLQEGNPDPNPLWFTLCMKPDRTLKNGKKKKKKKMSSGNLLIPIPVPNPPLEHWSGHASVGSDIYFFGGYMEENVRSSRVVILDCRSHTLREAPSLQMERSDPAASVIDGKIYVAGGVDGDDADSLYPIEVFDIKTQIWDHRPIPYWEKDWGALSRSAYVDGKFYLTIGMKVMAYDLEESRWDFAGYQMGQSWFWSCNCVIENVLYCYGDAFRWFDTKLRLWKVMKVKGLPKLSRNVDVKIADYGGKMAIFWDNPSPSASDTNKIIRCAVIALERPNSEEIWGTVEWHEAVLTVPVSYEFEHALAVTV.

Residues 1–25 show a composition bias toward basic residues; sequence MSSPERKRKRVTSTKNPSVKKKKKI. The interval 1–29 is disordered; the sequence is MSSPERKRKRVTSTKNPSVKKKKKISPVP. Residues 29 to 75 form the F-box domain; that stretch reads PTPIPSLPDDLLVSIFARVSRLYYPILSLVSKSFRSLLRSPELYETR. Kelch repeat units lie at residues 150-197 and 198-246; these read DIYF…VIDG and KIYV…RSAY.

The sequence is that of F-box/kelch-repeat protein At4g39570 from Arabidopsis thaliana (Mouse-ear cress).